The primary structure comprises 401 residues: Short chain dehydrogenase/reductase dpchH (401 aa).

A glycan (N-linked (GlcNAc...) asparagine) is linked at N16. A helical transmembrane segment spans residues 51–71 (VRAVDVLFGTFLYVPLGILFL). NAD(+) contacts are provided by residues 72 to 80 (KKSLSGFGD), 99 to 100 (TG), and 118 to 120 (AKV). N-linked (GlcNAc...) asparagine glycosylation occurs at N242. Y275 acts as the Proton acceptor in catalysis. Residues 275–279 (YGTSK) and 308–310 (GTI) contribute to the NAD(+) site. N-linked (GlcNAc...) asparagine glycosylation is present at N386.

It is found in the membrane. The protein operates within secondary metabolite biosynthesis; terpenoid biosynthesis. Functionally, short chain dehydrogenase/reductase; part of the gene cluster that mediates the biosynthesis of the diterpenoid pyrones higginsianins A and B. The first step of the pathway is the synthesis of the alpha-pyrone moiety by the polyketide synthase dpchA via condensation of one acetyl-CoA starter unit with 3 malonyl-CoA units and 2 methylations. The alpha-pyrone is then combined with geranylgeranyl pyrophosphate (GGPP) formed by the GGPP synthase dpchD through the action of the prenyltransferase dpchC to yield a linear alpha-pyrone diterpenoid. Subsequent steps in the diterpenoid pyrone biosynthetic pathway involve the decalin core formation, which is initiated by the epoxidation of the C10-C11 olefin by the FAD-dependent oxidoreductase dpchE, and is followed by a cyclization cascade catalyzed by the terpene cyclase dpchB. The short chain dehydrogenase/reductase dpchG then oxidizes the 8S hydroxy group to a ketone and the short chain dehydrogenase/reductase dpchH reduces the ketone to the 8R hydroxy group to yield higginsianin B. Finally, the FAD-dependent oxidoreductase dpchF converts higginsianin B into higginsianin A. The polypeptide is Short chain dehydrogenase/reductase dpchH (Colletotrichum higginsianum (strain IMI 349063) (Crucifer anthracnose fungus)).